The chain runs to 364 residues: Nucleoporin SEH1 (364 aa).

WD repeat units follow at residues 10–49 (DHKD…EWNC), 55–96 (THSG…SNDK), 111–152 (DSRT…NLSQ), 160–210 (SCKL…RKYA), 217–258 (TVTD…KESS), and 275–314 (GHNS…NWKC). The tract at residues 326–364 (NGAAGQAGTPGAAGTPGGPASQNALQAVAGRKKAQLMPG) is disordered. The span at 327–338 (GAAGQAGTPGAA) shows a compositional bias: low complexity. A compositionally biased stretch (basic residues) spans 355–364 (GRKKAQLMPG).

The protein belongs to the WD repeat SEC13 family. Component of the Nup107-160 subcomplex of the nuclear pore complex (NPC). The Nup107-160 subcomplex includes NUP160, NUP133, NUP107, NUP98, NUP85, NUP43, NUP37, SEH1 and SEC13. Component of the GATOR2 subcomplex, composed of MIOS, SEC13, SEH1L, WDR24 and WDR59. The GATOR2 complex interacts with CASTOR1 and CASTOR2; the interaction is negatively regulated by arginine. The GATOR2 complex interacts with SESN1, SESN2 and SESN3; the interaction is negatively regulated by amino acids.

Its subcellular location is the chromosome. The protein localises to the centromere. It localises to the kinetochore. The protein resides in the nucleus. It is found in the nuclear pore complex. Its subcellular location is the lysosome membrane. The GATOR2 complex is negatively regulated by the upstream amino acid sensors CASTOR1 and SESN2, which sequester the GATOR2 complex in absence of amino acids. In the presence of abundant amino acids, GATOR2 is released from CASTOR1 and SESN2 and activated. Functionally, component of the Nup107-160 subcomplex of the nuclear pore complex (NPC). The Nup107-160 subcomplex is required for the assembly of a functional NPC. The Nup107-160 subcomplex is also required for normal kinetochore microtubule attachment, mitotic progression and chromosome segregation. This subunit plays a role in recruitment of the Nup107-160 subcomplex to the kinetochore. In terms of biological role, as a component of the GATOR2 complex, functions as an activator of the amino acid-sensing branch of the mTORC1 signaling pathway. The GATOR2 complex indirectly activates mTORC1 through the inhibition of the GATOR1 subcomplex. GATOR2 probably acts as an E3 ubiquitin-protein ligase toward GATOR1. In the presence of abundant amino acids, the GATOR2 complex mediates ubiquitination of the NPRL2 core component of the GATOR1 complex, leading to GATOR1 inactivation. In the absence of amino acids, GATOR2 is inhibited, activating the GATOR1 complex. The polypeptide is Nucleoporin SEH1 (seh1l) (Osmerus mordax (Rainbow smelt)).